Here is a 191-residue protein sequence, read N- to C-terminus: Large ribosomal subunit protein bL25 (191 aa).

It belongs to the bacterial ribosomal protein bL25 family. CTC subfamily. In terms of assembly, part of the 50S ribosomal subunit; part of the 5S rRNA/L5/L18/L25 subcomplex. Contacts the 5S rRNA. Binds to the 5S rRNA independently of L5 and L18.

This is one of the proteins that binds to the 5S RNA in the ribosome where it forms part of the central protuberance. This Nitratidesulfovibrio vulgaris (strain DSM 19637 / Miyazaki F) (Desulfovibrio vulgaris) protein is Large ribosomal subunit protein bL25.